An 89-amino-acid polypeptide reads, in one-letter code: Small ribosomal subunit protein uS15 (89 aa).

This sequence belongs to the universal ribosomal protein uS15 family. In terms of assembly, part of the 30S ribosomal subunit. Forms a bridge to the 50S subunit in the 70S ribosome, contacting the 23S rRNA.

One of the primary rRNA binding proteins, it binds directly to 16S rRNA where it helps nucleate assembly of the platform of the 30S subunit by binding and bridging several RNA helices of the 16S rRNA. Functionally, forms an intersubunit bridge (bridge B4) with the 23S rRNA of the 50S subunit in the ribosome. In Pectobacterium carotovorum subsp. carotovorum (strain PC1), this protein is Small ribosomal subunit protein uS15.